We begin with the raw amino-acid sequence, 347 residues long: Protein YIPF3 (347 aa).

Positions 1 to 28 (MATQAAPASGVRNGAGPEWGGFEENIQG) are disordered. The residue at position 2 (Ala-2) is an N-acetylalanine. The Cytoplasmic portion of the chain corresponds to 2-145 (ATQAAPASGV…PIKMVNFPQK (144 aa)). Residues 146-166 (VAGELYGPLMLVFTLVAILLH) traverse the membrane as a helical segment. The Lumenal portion of the chain corresponds to 167 to 184 (GMKTSDTIIREGTLMGTA). The helical transmembrane segment at 185–205 (IGTCFGYWLGVSSFIYFLAYL) threads the bilayer. Topologically, residues 206–211 (CNAQIT) are cytoplasmic. Residues 212 to 234 (MLQMLALLGYGLFGHCIVLFITY) form a helical membrane-spanning segment. Residues 235–237 (NIH) are Lumenal-facing. Residues 238–260 (LHALFYLFWLLLGGLSTLRMVAV) form a helical membrane-spanning segment. Topologically, residues 261–271 (LVSRTVGPTQR) are cytoplasmic. The helical transmembrane segment at 272–292 (LLLCGTLAALHMLFLLYLHFA) threads the bilayer. Topologically, residues 293–347 (YHKVVEGILDTLEGPNIPPMQRVPRDIPAVLPAAKLPVAVVNATAKAIAVTLQSH) are lumenal. The N-linked (GlcNAc...) asparagine glycan is linked to Asn-334.

This sequence belongs to the YIP1 family. Interacts with YIPF4 and YIPF5.

The protein resides in the cell membrane. The protein localises to the golgi apparatus. Its subcellular location is the cis-Golgi network membrane. It localises to the cytoplasm. In terms of biological role, involved in the maintenance of the Golgi structure. May play a role in hematopoiesis. The protein is Protein YIPF3 (Yipf3) of Rattus norvegicus (Rat).